Here is a 157-residue protein sequence, read N- to C-terminus: Increased recombination centers protein 23 (157 aa).

The Cytoplasmic segment spans residues 1–6 (MIEALE). Residues 7–29 (IVLLLVIQSLQYICRTCIAFLLI) traverse the membrane as a helical segment. Residues 30-33 (PFLG) are Lumenal-facing. The chain crosses the membrane as a helical span at residues 34–56 (LYAFDLFLYVYRMILYLSQMFNY). The Cytoplasmic portion of the chain corresponds to 57-157 (KRKLGRSKTN…EEGYYIAGSI (101 aa)).

Its subcellular location is the endoplasmic reticulum membrane. Its function is as follows. Is probably involved in a pathway contributing to genomic integrity. In Saccharomyces cerevisiae (strain ATCC 204508 / S288c) (Baker's yeast), this protein is Increased recombination centers protein 23 (IRC23).